The primary structure comprises 104 residues: Large ribosomal subunit protein uL24 (104 aa).

Belongs to the universal ribosomal protein uL24 family. In terms of assembly, part of the 50S ribosomal subunit.

One of two assembly initiator proteins, it binds directly to the 5'-end of the 23S rRNA, where it nucleates assembly of the 50S subunit. Functionally, one of the proteins that surrounds the polypeptide exit tunnel on the outside of the subunit. The sequence is that of Large ribosomal subunit protein uL24 from Chromobacterium violaceum (strain ATCC 12472 / DSM 30191 / JCM 1249 / CCUG 213 / NBRC 12614 / NCIMB 9131 / NCTC 9757 / MK).